A 108-amino-acid chain; its full sequence is DNA-directed RNA polymerase subunit omega (108 aa).

Belongs to the RNA polymerase subunit omega family. In terms of assembly, the RNAP catalytic core consists of 2 alpha, 1 beta, 1 beta' and 1 omega subunit. When a sigma factor is associated with the core the holoenzyme is formed, which can initiate transcription.

It catalyses the reaction RNA(n) + a ribonucleoside 5'-triphosphate = RNA(n+1) + diphosphate. Promotes RNA polymerase assembly. Latches the N- and C-terminal regions of the beta' subunit thereby facilitating its interaction with the beta and alpha subunits. In Mycolicibacterium paratuberculosis (strain ATCC BAA-968 / K-10) (Mycobacterium paratuberculosis), this protein is DNA-directed RNA polymerase subunit omega.